Consider the following 383-residue polypeptide: S-adenosylmethionine synthase (383 aa).

Residue His15 participates in ATP binding. Mg(2+) is bound at residue Asp17. Residue Glu43 participates in K(+) binding. Glu56 and Gln99 together coordinate L-methionine. The flexible loop stretch occupies residues 99–109 (QSPDINQGVDR). Residues 164-166 (DAK), 230-231 (RF), Asp239, 245-246 (RK), Ala262, and Lys266 contribute to the ATP site. Residue Asp239 coordinates L-methionine. Lys270 provides a ligand contact to L-methionine.

Belongs to the AdoMet synthase family. In terms of assembly, homotetramer; dimer of dimers. It depends on Mg(2+) as a cofactor. K(+) serves as cofactor.

The protein resides in the cytoplasm. The catalysed reaction is L-methionine + ATP + H2O = S-adenosyl-L-methionine + phosphate + diphosphate. The protein operates within amino-acid biosynthesis; S-adenosyl-L-methionine biosynthesis; S-adenosyl-L-methionine from L-methionine: step 1/1. Its function is as follows. Catalyzes the formation of S-adenosylmethionine (AdoMet) from methionine and ATP. The overall synthetic reaction is composed of two sequential steps, AdoMet formation and the subsequent tripolyphosphate hydrolysis which occurs prior to release of AdoMet from the enzyme. This is S-adenosylmethionine synthase from Shewanella amazonensis (strain ATCC BAA-1098 / SB2B).